The primary structure comprises 86 residues: Colicin-E9 immunity protein (86 aa).

It belongs to the colicins ColE2/ColE8/ColE9 and pyocins S1/S2 family.

Functionally, this protein is able to protect a cell, which harbors the plasmid ColE9 encoding colicin E9, against colicin E9, it binds specifically to the DNase-type colicin and inhibits its bactericidal activity. This chain is Colicin-E9 immunity protein (imm), found in Escherichia coli.